Consider the following 33-residue polypeptide: Mytimycin (33 aa).

It localises to the secreted. Has antifungal activity against N.crassa and F.culmorum. This Mytilus edulis (Blue mussel) protein is Mytimycin.